The primary structure comprises 85 residues: ATP synthase subunit c (85 aa).

Transmembrane regions (helical) follow at residues 10–30 and 53–73; these read IAVG…FAIL and FIIA…ALLF.

This sequence belongs to the ATPase C chain family. In terms of assembly, F-type ATPases have 2 components, F(1) - the catalytic core - and F(0) - the membrane proton channel. F(1) has five subunits: alpha(3), beta(3), gamma(1), delta(1), epsilon(1). F(0) has three main subunits: a(1), b(2) and c(10-14). The alpha and beta chains form an alternating ring which encloses part of the gamma chain. F(1) is attached to F(0) by a central stalk formed by the gamma and epsilon chains, while a peripheral stalk is formed by the delta and b chains.

Its subcellular location is the cell inner membrane. Functionally, f(1)F(0) ATP synthase produces ATP from ADP in the presence of a proton or sodium gradient. F-type ATPases consist of two structural domains, F(1) containing the extramembraneous catalytic core and F(0) containing the membrane proton channel, linked together by a central stalk and a peripheral stalk. During catalysis, ATP synthesis in the catalytic domain of F(1) is coupled via a rotary mechanism of the central stalk subunits to proton translocation. Key component of the F(0) channel; it plays a direct role in translocation across the membrane. A homomeric c-ring of between 10-14 subunits forms the central stalk rotor element with the F(1) delta and epsilon subunits. This chain is ATP synthase subunit c, found in Aliivibrio salmonicida (strain LFI1238) (Vibrio salmonicida (strain LFI1238)).